We begin with the raw amino-acid sequence, 194 residues long: 7-methyl-GTP pyrophosphatase (194 aa).

The active-site Proton acceptor is the Asp69.

The protein belongs to the Maf family. YceF subfamily. The cofactor is a divalent metal cation.

It localises to the cytoplasm. The enzyme catalyses N(7)-methyl-GTP + H2O = N(7)-methyl-GMP + diphosphate + H(+). Nucleoside triphosphate pyrophosphatase that hydrolyzes 7-methyl-GTP (m(7)GTP). May have a dual role in cell division arrest and in preventing the incorporation of modified nucleotides into cellular nucleic acids. The polypeptide is 7-methyl-GTP pyrophosphatase (yceF1) (Salmonella paratyphi A (strain ATCC 9150 / SARB42)).